We begin with the raw amino-acid sequence, 433 residues long: MSDSPQTIQHNVPLAELDPDVARAIDGELARQRNTLEMIASENFVPRAVLQAQGSVLTNKYAEGYPGRRYYGGCEHVDVIEDLARDRAKQVFGAEFANVQPHAGAQANAAVLMALASPRDKILGLSLAHGGHLTHGMHLNFSGKLYEAIAYEVDPETMRIDMDKVREQALKEKPTVIIAGWSAYPRHQDFAAFRSIADEVGAKLWVDMAHFAGLVAAGLHPSPVPHADVVSTTVHKTLGGPRSGLILAKQEWAKKLNSAVFPGQQGGPLMHAVAAKAVAMKVAQTEEFRDRQARTLEGAKILAERLSAADTKGAGVEVLTGGTDVHLVLADLRHSELDGQQAEDLLHEVGITVNRNAVPFDPRPPMVTSGLRIGTPALASRGLDTAAFTEVADVIGTALAQGKNADVEALRARVSKVAEDFPLYEGLEDWKLV.

(6S)-5,6,7,8-tetrahydrofolate-binding positions include L127 and 131–133 (GHL). K236 carries the post-translational modification N6-(pyridoxal phosphate)lysine.

It belongs to the SHMT family. Homodimer. It depends on pyridoxal 5'-phosphate as a cofactor.

It is found in the cytoplasm. The enzyme catalyses (6R)-5,10-methylene-5,6,7,8-tetrahydrofolate + glycine + H2O = (6S)-5,6,7,8-tetrahydrofolate + L-serine. Its pathway is one-carbon metabolism; tetrahydrofolate interconversion. The protein operates within amino-acid biosynthesis; glycine biosynthesis; glycine from L-serine: step 1/1. In terms of biological role, catalyzes the reversible interconversion of serine and glycine with tetrahydrofolate (THF) serving as the one-carbon carrier. This reaction serves as the major source of one-carbon groups required for the biosynthesis of purines, thymidylate, methionine, and other important biomolecules. Also exhibits THF-independent aldolase activity toward beta-hydroxyamino acids, producing glycine and aldehydes, via a retro-aldol mechanism. The protein is Serine hydroxymethyltransferase of Corynebacterium urealyticum (strain ATCC 43042 / DSM 7109).